A 642-amino-acid chain; its full sequence is MSKVIGIDLGTTNSCVAVMEGKNAKVIENAEGMRTTPSMTAFTESGERLVGQPAKRQAVTNPTSTLFAIKRLIGRRFEDPITKKDMNLVPYHIVAGDNGDAWVEARDAKYSPSQVSAFILQKMKETAEGYLGEKVTQAVITVPAYFNDAQRQATKDAGRIAGLEVLRIINEPTAAALAYGLEKKGAGTIAVYDLGGGTFDVSVLEIGDGVFEVKSTNGDTFLGGEDFDARIMDYLADEFKKEQGIDLRKDRLALQRLKEAAEKAKIELSSSMQTEVNLPFITADASGPKHLNIKLTRSKLEALVEDLVARTVEPCKAALKDAGVKASEIDEVILVGGMTRMPKIQEVVKEFFGREPHKGVNPDEVVAIGAAIQGGVLKGEVKDVLLLDVTPLSLGIETLGGVFTRLIDRNTTIPTRKSQVFSTAEDNQTAVTIRVFQGEREMAADNKVLGQFDLVGIPPAPRGVPQVEVTFDIDANGLVNVSAKDKATGKEQQIRIQASGGLSDADIEKMVKEAEAHAAEDKKRKELIEARNHADGLIHTTEKSLKEFGDKAGAELTGAIEKEITALKAVMDGDDVEAIKAKTESLMQASMKLGEAMYKAQEAAGGAEAEAAAGGHGGASGSHDDKVVDADFEEVDGDKKGK.

T198 is subject to Phosphothreonine; by autocatalysis. The disordered stretch occupies residues 602-642 (EAAGGAEAEAAAGGHGGASGSHDDKVVDADFEEVDGDKKGK). The segment covering 603 to 613 (AAGGAEAEAAA) has biased composition (low complexity).

The protein belongs to the heat shock protein 70 family.

Its function is as follows. Acts as a chaperone. In Paramagnetospirillum magneticum (strain ATCC 700264 / AMB-1) (Magnetospirillum magneticum), this protein is Chaperone protein DnaK.